We begin with the raw amino-acid sequence, 300 residues long: N-acetylmuramic acid 6-phosphate etherase (300 aa).

One can recognise an SIS domain in the interval 57-220; the sequence is IAVAFQCGGR…TTGAMIRTGK (164 aa). Glu85 (proton donor) is an active-site residue. Residue Glu116 is part of the active site.

The protein belongs to the GCKR-like family. MurNAc-6-P etherase subfamily. Homodimer.

The enzyme catalyses N-acetyl-D-muramate 6-phosphate + H2O = N-acetyl-D-glucosamine 6-phosphate + (R)-lactate. It participates in amino-sugar metabolism; 1,6-anhydro-N-acetylmuramate degradation. The protein operates within amino-sugar metabolism; N-acetylmuramate degradation. It functions in the pathway cell wall biogenesis; peptidoglycan recycling. In terms of biological role, specifically catalyzes the cleavage of the D-lactyl ether substituent of MurNAc 6-phosphate, producing GlcNAc 6-phosphate and D-lactate. Together with AnmK, is also required for the utilization of anhydro-N-acetylmuramic acid (anhMurNAc) either imported from the medium or derived from its own cell wall murein, and thus plays a role in cell wall recycling. This is N-acetylmuramic acid 6-phosphate etherase from Aliivibrio salmonicida (strain LFI1238) (Vibrio salmonicida (strain LFI1238)).